The sequence spans 529 residues: Potassium voltage-gated channel subfamily A member 6 (529 aa).

Residues 1 to 33 are disordered; sequence MRSEKSLTLAAPGEVRGPEGEQQDAGDFPEAGG. Topologically, residues 1–171 are cytoplasmic; that stretch reads MRSEKSLTLA…LLFEYPESSG (171 aa). Ser3 carries the post-translational modification Phosphoserine. A helical membrane pass occupies residues 172–193; it reads PARGIAIVSVLVILISIVIFCL. At 194–262 the chain is on the extracellular side; it reads ETLPQFRVDG…TLGGSFFTDP (69 aa). Residues 210 to 220 are compositionally biased toward low complexity; it reads GVSRVSPVSRG. Residues 210 to 233 are disordered; that stretch reads GVSRVSPVSRGSQEEEEDEDDSYT. Residues 263–284 traverse the membrane as a helical segment; that stretch reads FFLVETLCIVWFTFELLVRFSA. Cys285 is lipidated: S-palmitoyl cysteine. Over 285–295 the chain is Cytoplasmic; that stretch reads CPSKPAFFRNI. A helical transmembrane segment spans residues 296–316; the sequence is MNIIDLVAIFPYFITLGTELV. The Extracellular portion of the chain corresponds to 317–337; sequence QQQEQQPASGGGGQNGQQAMS. Residues 338-358 traverse the membrane as a helical; Voltage-sensor segment; the sequence is LAILRVIRLVRVFRIFKLSRH. The Cytoplasmic segment spans residues 359–373; that stretch reads SKGLQILGKTLQASM. The S4-S5 linker stretch occupies residues 360–373; that stretch reads KGLQILGKTLQASM. Residues 374–395 form a helical membrane-spanning segment; that stretch reads RELGLLIFFLFIGVILFSSAVY. Over 396–409 the chain is Extracellular; that stretch reads FAEADDDDSLFPSI. The helical intramembrane region spans 410-421; it reads PDAFWWAVVTMT. The short motif at 422-427 is the Selectivity filter element; sequence TVGYGD. The stretch at 422–429 is an intramembrane region; the sequence is TVGYGDMY. At 430-436 the chain is on the extracellular side; that stretch reads PMTVGGK. A helical transmembrane segment spans residues 437-465; that stretch reads IVGSLCAIAGVLTIALPVPVIVSNFNYFY. Residues 466-529 lie on the Cytoplasmic side of the membrane; sequence HRETEQEEQG…YAEKRMLTEV (64 aa). A disordered region spans residues 488–513; sequence DLRATDNGLGKPDFPEANRERRPSYL. Over residues 500 to 510 the composition is skewed to basic and acidic residues; the sequence is DFPEANRERRP. Ser511 is modified (phosphoserine; by PKA). Residues 527–529 carry the PDZ-binding motif; that stretch reads TEV.

This sequence belongs to the potassium channel family. A (Shaker) (TC 1.A.1.2) subfamily. Kv1.6/KCNA6 sub-subfamily. As to quaternary structure, homotetramer and heterotetramer of potassium channel proteins. Interacts with KCNAB1 and KCNAB2.

It localises to the cell membrane. It carries out the reaction K(+)(in) = K(+)(out). Its function is as follows. Voltage-gated potassium channel that mediates transmembrane potassium transport in excitable membranes. Forms tetrameric potassium-selective channels through which potassium ions pass in accordance with their electrochemical gradient. The channel alternates between opened and closed conformations in response to the voltage difference across the membrane. Can form functional homotetrameric channels and heterotetrameric channels that contain variable proportions of KCNA1, KCNA2, KCNA4, KCNA6, and possibly other family members as well; channel properties depend on the type of alpha subunits that are part of the channel. Channel properties are modulated by cytoplasmic beta subunits that regulate the subcellular location of the alpha subunits and promote rapid inactivation. Homotetrameric channels display rapid activation and slow inactivation. This Homo sapiens (Human) protein is Potassium voltage-gated channel subfamily A member 6 (KCNA6).